Consider the following 342-residue polypeptide: Pyridoxal 4-dehydrogenase (342 aa).

Aspartate 56 is a catalytic residue. Tyrosine 61 (proton donor) is an active-site residue. Residue lysine 86 is part of the active site. Position 245-255 (245-255 (GVFNSGILAAP)) interacts with NADP(+).

Belongs to the aldo/keto reductase family. Homodimer.

It carries out the reaction pyridoxal + NAD(+) = 4-pyridoxolactone + NADH + H(+). It participates in cofactor degradation; B6 vitamer degradation; 4-pyridoxate from pyridoxal: step 1/2. The sequence is that of Pyridoxal 4-dehydrogenase (pld1) from Microbacterium luteolum (Aureobacterium luteolum).